The following is a 121-amino-acid chain: Large ribosomal subunit protein uL18 (121 aa).

The protein belongs to the universal ribosomal protein uL18 family. Part of the 50S ribosomal subunit; part of the 5S rRNA/L5/L18/L25 subcomplex. Contacts the 5S and 23S rRNAs.

Its function is as follows. This is one of the proteins that bind and probably mediate the attachment of the 5S RNA into the large ribosomal subunit, where it forms part of the central protuberance. This Ehrlichia canis (strain Jake) protein is Large ribosomal subunit protein uL18.